The chain runs to 149 residues: Ribosomal RNA large subunit methyltransferase H (149 aa).

Residues Leu-71, Gly-98, and 117 to 122 (LSKLTL) each bind S-adenosyl-L-methionine.

It belongs to the RNA methyltransferase RlmH family. As to quaternary structure, homodimer.

It localises to the cytoplasm. The enzyme catalyses pseudouridine(1915) in 23S rRNA + S-adenosyl-L-methionine = N(3)-methylpseudouridine(1915) in 23S rRNA + S-adenosyl-L-homocysteine + H(+). Its function is as follows. Specifically methylates the pseudouridine at position 1915 (m3Psi1915) in 23S rRNA. The protein is Ribosomal RNA large subunit methyltransferase H of Campylobacter jejuni subsp. doylei (strain ATCC BAA-1458 / RM4099 / 269.97).